Here is a 505-residue protein sequence, read N- to C-terminus: Deoxyguanosinetriphosphate triphosphohydrolase (505 aa).

The HD domain occupies Arg-66–Cys-273.

This sequence belongs to the dGTPase family. Type 1 subfamily. As to quaternary structure, homotetramer. The cofactor is Mg(2+).

It carries out the reaction dGTP + H2O = 2'-deoxyguanosine + triphosphate + H(+). DGTPase preferentially hydrolyzes dGTP over the other canonical NTPs. This chain is Deoxyguanosinetriphosphate triphosphohydrolase, found in Shigella flexneri.